A 262-amino-acid chain; its full sequence is Acyl-[acyl-carrier-protein]--UDP-N-acetylglucosamine O-acyltransferase (262 aa).

It belongs to the transferase hexapeptide repeat family. LpxA subfamily. As to quaternary structure, homotrimer.

The protein resides in the cytoplasm. It carries out the reaction a (3R)-hydroxyacyl-[ACP] + UDP-N-acetyl-alpha-D-glucosamine = a UDP-3-O-[(3R)-3-hydroxyacyl]-N-acetyl-alpha-D-glucosamine + holo-[ACP]. It functions in the pathway glycolipid biosynthesis; lipid IV(A) biosynthesis; lipid IV(A) from (3R)-3-hydroxytetradecanoyl-[acyl-carrier-protein] and UDP-N-acetyl-alpha-D-glucosamine: step 1/6. Its function is as follows. Involved in the biosynthesis of lipid A, a phosphorylated glycolipid that anchors the lipopolysaccharide to the outer membrane of the cell. The sequence is that of Acyl-[acyl-carrier-protein]--UDP-N-acetylglucosamine O-acyltransferase from Burkholderia vietnamiensis (strain G4 / LMG 22486) (Burkholderia cepacia (strain R1808)).